Reading from the N-terminus, the 174-residue chain is Large ribosomal subunit protein bL12cz (174 aa).

A chloroplast-targeting transit peptide spans 1–45; sequence MASTTFSSAFSILSLPSSSPSPPPSPPRTLPVANRRRRAAAVAST. The disordered stretch occupies residues 1-46; sequence MASTTFSSAFSILSLPSSSPSPPPSPPRTLPVANRRRRAAAVASTA. Residues 7-18 show a composition bias toward low complexity; sequence SSAFSILSLPSS. The span at 19 to 29 shows a compositional bias: pro residues; the sequence is SPSPPPSPPRT.

Belongs to the bacterial ribosomal protein bL12 family.

It localises to the plastid. Its subcellular location is the chloroplast. This Secale cereale (Rye) protein is Large ribosomal subunit protein bL12cz (RPL12-1).